A 219-amino-acid polypeptide reads, in one-letter code: Cytochrome b6 (219 aa).

The helical transmembrane segment at 32–52 threads the bilayer; that stretch reads IFYCFGGIVLTCFIIQAATGF. Cys35 provides a ligand contact to heme c. Residues His86 and His100 each coordinate heme b. 3 helical membrane-spanning segments follow: residues 90-110, 116-136, and 190-210; these read SGLM…TAGF, LTWI…VTGY, and AHTF…FLMI. Heme b-binding residues include His191 and His206.

The protein belongs to the cytochrome b family. PetB subfamily. In terms of assembly, the 4 large subunits of the cytochrome b6-f complex are cytochrome b6, subunit IV (17 kDa polypeptide, PetD), cytochrome f and the Rieske protein, while the 4 small subunits are PetG, PetL, PetM and PetN. The complex functions as a dimer. Requires heme b as cofactor. The cofactor is heme c.

Its subcellular location is the plastid. It localises to the chloroplast thylakoid membrane. Functionally, component of the cytochrome b6-f complex, which mediates electron transfer between photosystem II (PSII) and photosystem I (PSI), cyclic electron flow around PSI, and state transitions. The chain is Cytochrome b6 from Amphidinium operculatum (Dinoflagellate).